The primary structure comprises 822 residues: Cation/H(+) antiporter 3 (822 aa).

12 helical membrane-spanning segments follow: residues 55 to 75, 116 to 136, 150 to 170, 190 to 210, 224 to 244, 274 to 294, 305 to 325, 331 to 351, 362 to 382, 388 to 408, 418 to 438, and 447 to 467; these read FPHLQMIFLIISFLWQFLHFF, EIVFSLTAACSYMMFWFLMGV, AITIGLSSVLLSTLVCSVIFF, YVVIYSIQCLSSFPVVGNLLF, ISSAVISDFSTSILASVLIFM, IVVLFVCIAIYVFRPLMFYII, AIYLSTIIVMVSGSAILANWC, MGPFILGLAVPHGPPLGSAII, FLPFFIASSSTEIDISALFGW, IILIMVTSFVVKFIFTTVPAL, FALSLIMSFKGIFELGAYALA, and ETFTVACLYITLNSAIIPPIL.

Belongs to the monovalent cation:proton antiporter 2 (CPA2) transporter (TC 2.A.37) family. CHX (TC 2.A.37.4) subfamily.

It localises to the membrane. Its function is as follows. May operate as a cation/H(+) antiporter. The sequence is that of Cation/H(+) antiporter 3 (CHX3) from Arabidopsis thaliana (Mouse-ear cress).